The primary structure comprises 439 residues: MLTPEENLLLCRVEGDAPMGQMMRRHWTPVCLLEEVSEPDGTPVRARLFGEDLVVFRDTDGRVGVMDEYCPHRRVSLIYGRNENSGLRCLYHGWKMDVDGNVVEMVSEPAASNMCQKVKHTAYKTREWGGFVWAYMGPQDAIPEFVPPAWAPHEHVRVSIAKAIIPCNWAQILEGAIDSAHSSSLHSSDFVPARVGGAEATSKNWLRPSTDKAPRMQVERTSYGFRYAALRRPIQNAATSEYVRSTVFVAPATALIPPNNLYNVANINVPIDDTHTAFYFMAWGNPDNTPETETWRKFLGQQVGIDLDDSYRPLRNDGNRFFQDREAMKNGNFTGIKGFPNQDIAMWVTMGPIADRSDERLGASDLAVVEFRRVMLDALAAFQAGESAIGTGEKAIPSRICSFQAIVSKDIDWRDYQARYVWALDDANIVAEPDYEVHT.

A Rieske domain is found at 27-134; it reads WTPVCLLEEV…TREWGGFVWA (108 aa). [2Fe-2S] cluster contacts are provided by Cys-70, His-72, Cys-89, and His-92. Fe cation contacts are provided by His-181 and His-186.

Belongs to the bacterial ring-hydroxylating dioxygenase alpha subunit family. This dioxygenase system consists of two proteins: phthalate oxygenase and phthalate oxygenase reductase. It depends on [2Fe-2S] cluster as a cofactor. Requires Fe cation as cofactor.

The enzyme catalyses phthalate + NADH + O2 + H(+) = cis-4,5-dihydroxycyclohexa-2,6-diene-1,2-dicarboxylate + NAD(+). Its pathway is xenobiotic degradation; phthalate degradation; 3,4-dihydroxybenzoate from phthalate: step 1/3. The protein is Phthalate 4,5-dioxygenase oxygenase subunit (pht3) of Pseudomonas putida (Arthrobacter siderocapsulatus).